The chain runs to 136 residues: Small integral membrane protein 23 (136 aa).

Topologically, residues 1 to 31 (MTIQKTGCRGREAAEVVEQRRRSHHCDDRKQ) are cytoplasmic. A helical; Signal-anchor for type II membrane protein transmembrane segment spans residues 32 to 52 (TLLALLILVLYLGMGISGSSW). Topologically, residues 53–136 (EVSGQTKDCN…DLRPEDPCFT (84 aa)) are extracellular. The stretch at 92–124 (LKINLHGFLEKLEKEVRELEQLVRDLEFWLDAL) forms a coiled coil.

Its subcellular location is the membrane. This Mus musculus (Mouse) protein is Small integral membrane protein 23 (Smim23).